Consider the following 396-residue polypeptide: Digeranylgeranylglycerophospholipid reductase (396 aa).

FAD-binding residues include Gly14, Glu33, Cys44, Gly45, Gly47, Arg100, Ala124, Glu162, Asp283, Gly295, and Ile296. Positions 338 and 374 each coordinate a 2,3-bis-O-(geranylgeranyl)-sn-glycerol 1-phospholipid.

This sequence belongs to the geranylgeranyl reductase family. DGGGPL reductase subfamily. Requires FAD as cofactor.

The enzyme catalyses 2,3-bis-O-(phytanyl)-sn-glycerol 1-phosphate + 8 NADP(+) = 2,3-bis-O-(geranylgeranyl)-sn-glycerol 1-phosphate + 8 NADPH + 8 H(+). The catalysed reaction is 2,3-bis-O-(phytanyl)-sn-glycerol 1-phosphate + 8 NAD(+) = 2,3-bis-O-(geranylgeranyl)-sn-glycerol 1-phosphate + 8 NADH + 8 H(+). It catalyses the reaction a 2,3-bis-O-phytanyl-sn-glycerol 1-phospholipid + 8 A = a 2,3-bis-O-(geranylgeranyl)-sn-glycerol 1-phospholipid + 8 AH2. It carries out the reaction CDP-2,3-bis-O-(geranylgeranyl)-sn-glycerol + 8 AH2 = CDP-2,3-bis-O-(phytanyl)-sn-glycerol + 8 A. The enzyme catalyses archaetidylserine + 8 AH2 = 2,3-bis-O-phytanyl-sn-glycero-3-phospho-L-serine + 8 A. It participates in membrane lipid metabolism; glycerophospholipid metabolism. Is involved in the reduction of 2,3-digeranylgeranylglycerophospholipids (unsaturated archaeols) into 2,3-diphytanylglycerophospholipids (saturated archaeols) in the biosynthesis of archaeal membrane lipids. Catalyzes the formation of archaetidic acid (2,3-di-O-phytanyl-sn-glyceryl phosphate) from 2,3-di-O-geranylgeranylglyceryl phosphate (DGGGP) via the hydrogenation of each double bond of the isoprenoid chains. Is also probably able to reduce double bonds of geranyl groups in CDP-2,3-bis-O-(geranylgeranyl)-sn-glycerol and archaetidylserine, thus acting at various stages in the biosynthesis of archaeal membrane lipids. The sequence is that of Digeranylgeranylglycerophospholipid reductase from Thermoplasma volcanium (strain ATCC 51530 / DSM 4299 / JCM 9571 / NBRC 15438 / GSS1).